We begin with the raw amino-acid sequence, 612 residues long: Elongation factor 4 (612 aa).

Positions 12–194 (SRIRNFSIIA…QIVEKVPAPT (183 aa)) constitute a tr-type G domain. Residues 24–29 (DHGKST) and 141–144 (NKID) each bind GTP.

Belongs to the TRAFAC class translation factor GTPase superfamily. Classic translation factor GTPase family. LepA subfamily.

Its subcellular location is the cell membrane. It carries out the reaction GTP + H2O = GDP + phosphate + H(+). Its function is as follows. Required for accurate and efficient protein synthesis under certain stress conditions. May act as a fidelity factor of the translation reaction, by catalyzing a one-codon backward translocation of tRNAs on improperly translocated ribosomes. Back-translocation proceeds from a post-translocation (POST) complex to a pre-translocation (PRE) complex, thus giving elongation factor G a second chance to translocate the tRNAs correctly. Binds to ribosomes in a GTP-dependent manner. The polypeptide is Elongation factor 4 (Bacillus subtilis (strain 168)).